The primary structure comprises 206 residues: Large ribosomal subunit protein uL4 (206 aa).

Positions methionine 63 to glutamate 97 are disordered. Over residues tyrosine 64–alanine 77 the composition is skewed to basic residues.

Belongs to the universal ribosomal protein uL4 family. Part of the 50S ribosomal subunit.

Functionally, one of the primary rRNA binding proteins, this protein initially binds near the 5'-end of the 23S rRNA. It is important during the early stages of 50S assembly. It makes multiple contacts with different domains of the 23S rRNA in the assembled 50S subunit and ribosome. Forms part of the polypeptide exit tunnel. This Rhizobium rhizogenes (strain K84 / ATCC BAA-868) (Agrobacterium radiobacter) protein is Large ribosomal subunit protein uL4.